The chain runs to 96 residues: Protein Vpr (96 aa).

The segment at 1-42 is homooligomerization; that stretch reads MEQAPEDQGPQREPYNEWTLELLEELKSEAVRHFPRLWLHSL. A phosphoserine; by host mark is found at Ser-79, Ser-94, and Ser-96.

It belongs to the HIV-1 VPR protein family. As to quaternary structure, homooligomer, may form homodimer. Interacts with p6-gag region of the Pr55 Gag precursor protein through a (Leu-X-X)4 motif near the C-terminus of the P6gag protein. Interacts with host UNG. May interact with host RAD23A/HHR23A. Interacts with host VPRBP/DCAF1, leading to hijack the CUL4A-RBX1-DDB1-DCAF1/VPRBP complex, mediating ubiquitination of host proteins such as TERT and ZGPAT and arrest of the cell cycle in G2 phase. Phosphorylated on several residues by host. These phosphorylations regulate VPR activity for the nuclear import of the HIV-1 pre-integration complex.

Its subcellular location is the virion. It is found in the host nucleus. The protein localises to the host extracellular space. During virus replication, may deplete host UNG protein, and incude G2-M cell cycle arrest. Acts by targeting specific host proteins for degradation by the 26S proteasome, through association with the cellular CUL4A-DDB1 E3 ligase complex by direct interaction with host VPRPB/DCAF-1. Cell cycle arrest reportedly occurs within hours of infection and is not blocked by antiviral agents, suggesting that it is initiated by the VPR carried into the virion. Additionally, VPR induces apoptosis in a cell cycle dependent manner suggesting that these two effects are mechanistically linked. Detected in the serum and cerebrospinal fluid of AIDS patient, VPR may also induce cell death to bystander cells. In terms of biological role, during virus entry, plays a role in the transport of the viral pre-integration (PIC) complex to the host nucleus. This function is crucial for viral infection of non-dividing macrophages. May act directly at the nuclear pore complex, by binding nucleoporins phenylalanine-glycine (FG)-repeat regions. The polypeptide is Protein Vpr (Human immunodeficiency virus type 1 group M subtype B (isolate RF/HAT3) (HIV-1)).